The sequence spans 199 residues: Large ribosomal subunit protein bL25 (199 aa).

Belongs to the bacterial ribosomal protein bL25 family. CTC subfamily. As to quaternary structure, part of the 50S ribosomal subunit; part of the 5S rRNA/L5/L18/L25 subcomplex. Contacts the 5S rRNA. Binds to the 5S rRNA independently of L5 and L18.

In terms of biological role, this is one of the proteins that binds to the 5S RNA in the ribosome where it forms part of the central protuberance. The chain is Large ribosomal subunit protein bL25 from Caulobacter sp. (strain K31).